Here is a 430-residue protein sequence, read N- to C-terminus: Synaptotagmin-11 (430 aa).

Residues 1–15 (MAEITNIRPSFDVSP) lie on the Vesicular side of the membrane. Residues 16 to 36 (VAAGLIGASVLVVCVSVTVFV) traverse the membrane as a helical segment. Over 37 to 430 (WTCCHQQAEK…VAKWHSLSEY (394 aa)) the chain is Cytoplasmic. A disordered region spans residues 132–154 (RSPMTSLTPGESKPTSPSSPEED). Serine 133 bears the Phosphoserine mark. A compositionally biased stretch (low complexity) spans 140–150 (PGESKPTSPSS). C2 domains lie at 156 to 278 (MLGS…QLTR) and 290 to 425 (SRGE…AKWH). Ca(2+) contacts are provided by aspartate 249, serine 252, and aspartate 255.

The protein belongs to the synaptotagmin family. In terms of assembly, homodimer. Can also form heterodimers. Interacts with PRKN. Interacts (via C2 2 domain) with AGO2 and SND1; the interaction with SND1 is direct. Interacts with KIF1A; the interaction increases in presence of calcium. The cofactor is Ca(2+). Post-translationally, ubiquitinated, at least by PRKN, and targeted to the proteasome complex for degradation. Ubiquitination is inhibited by ATP13A2. Highly expressed in brain and at lower levels in other tissues.

It localises to the cytoplasmic vesicle membrane. The protein resides in the perikaryon. It is found in the golgi apparatus. The protein localises to the trans-Golgi network membrane. Its subcellular location is the recycling endosome membrane. It localises to the lysosome membrane. The protein resides in the cytoplasmic vesicle. It is found in the phagosome. The protein localises to the cell projection. Its subcellular location is the axon. It localises to the dendrite. The protein resides in the postsynaptic density. It is found in the clathrin-coated vesicle membrane. Its function is as follows. Synaptotagmin family member involved in vesicular and membrane trafficking which does not bind Ca(2+). Inhibits clathrin-mediated and bulk endocytosis in neurons, functions to ensure precision in vesicle retrieval. Plays an important role in dopamine transmission by regulating endocytosis and the vesicle-recycling process. Essential component of a neuronal vesicular trafficking pathway that differs from the synaptic vesicle trafficking pathway but is crucial for development and synaptic plasticity. In macrophages and microglia, inhibits the conventional cytokine secretion, of at least IL6 and TNF, and phagocytosis. In astrocytes, regulates lysosome exocytosis, mechanism required for the repair of injured astrocyte cell membrane. Required for the ATP13A2-mediated regulation of the autophagy-lysosome pathway. The sequence is that of Synaptotagmin-11 from Rattus norvegicus (Rat).